The chain runs to 804 residues: Leucine--tRNA ligase (804 aa).

Positions Pro40 to His51 match the 'HIGH' region motif. The 'KMSKS' region motif lies at Lys576–Ser580. Lys579 lines the ATP pocket.

It belongs to the class-I aminoacyl-tRNA synthetase family.

It is found in the cytoplasm. The catalysed reaction is tRNA(Leu) + L-leucine + ATP = L-leucyl-tRNA(Leu) + AMP + diphosphate. In Staphylococcus aureus (strain MRSA252), this protein is Leucine--tRNA ligase.